Reading from the N-terminus, the 318-residue chain is NAD kinase (318 aa).

Residue Asp-84 is the Proton acceptor of the active site. NAD(+) contacts are provided by residues 84 to 85, Arg-89, 159 to 160, Arg-170, Asp-189, and 200 to 205; these read DG, NE, and TAYAFS.

Belongs to the NAD kinase family. A divalent metal cation is required as a cofactor.

It localises to the cytoplasm. It catalyses the reaction NAD(+) + ATP = ADP + NADP(+) + H(+). In terms of biological role, involved in the regulation of the intracellular balance of NAD and NADP, and is a key enzyme in the biosynthesis of NADP. Catalyzes specifically the phosphorylation on 2'-hydroxyl of the adenosine moiety of NAD to yield NADP. This Cutibacterium acnes (strain DSM 16379 / KPA171202) (Propionibacterium acnes) protein is NAD kinase.